Consider the following 88-residue polypeptide: uncharacterized protein (88 aa).

Helical transmembrane passes span 5-25 (AIPF…LLFV) and 36-56 (CYYL…VMIF).

It is found in the membrane. This is an uncharacterized protein from Saccharomyces cerevisiae (strain ATCC 204508 / S288c) (Baker's yeast).